A 335-amino-acid chain; its full sequence is Tetraacyldisaccharide 4'-kinase (335 aa).

59–66 (TAGGNGKT) serves as a coordination point for ATP.

Belongs to the LpxK family.

It catalyses the reaction a lipid A disaccharide + ATP = a lipid IVA + ADP + H(+). It functions in the pathway glycolipid biosynthesis; lipid IV(A) biosynthesis; lipid IV(A) from (3R)-3-hydroxytetradecanoyl-[acyl-carrier-protein] and UDP-N-acetyl-alpha-D-glucosamine: step 6/6. Functionally, transfers the gamma-phosphate of ATP to the 4'-position of a tetraacyldisaccharide 1-phosphate intermediate (termed DS-1-P) to form tetraacyldisaccharide 1,4'-bis-phosphate (lipid IVA). In Aliivibrio salmonicida (strain LFI1238) (Vibrio salmonicida (strain LFI1238)), this protein is Tetraacyldisaccharide 4'-kinase.